The following is a 100-amino-acid chain: Small ribosomal subunit protein uS14c (100 aa).

This sequence belongs to the universal ribosomal protein uS14 family. In terms of assembly, part of the 30S ribosomal subunit.

It is found in the plastid. The protein resides in the chloroplast. Binds 16S rRNA, required for the assembly of 30S particles. The chain is Small ribosomal subunit protein uS14c from Euglena gracilis.